A 168-amino-acid polypeptide reads, in one-letter code: Small ribosomal subunit protein uS5 (168 aa).

One can recognise an S5 DRBM domain in the interval 14 to 77 (FEERVVSINR…EAAKKNLITV (64 aa)).

The protein belongs to the universal ribosomal protein uS5 family. Part of the 30S ribosomal subunit. Contacts proteins S4 and S8.

Functionally, with S4 and S12 plays an important role in translational accuracy. Located at the back of the 30S subunit body where it stabilizes the conformation of the head with respect to the body. The protein is Small ribosomal subunit protein uS5 of Lactococcus lactis subsp. cremoris (strain MG1363).